The chain runs to 582 residues: Aspartate--tRNA ligase (582 aa).

E174 is a binding site for L-aspartate. Positions 198-201 are aspartate; that stretch reads QITK. Residue R220 participates in L-aspartate binding. Residues 220–222 and Q229 each bind ATP; that span reads RDE. L-aspartate is bound at residue H443. E477 lines the ATP pocket. R484 lines the L-aspartate pocket. 529-532 is a binding site for ATP; it reads GLDR.

This sequence belongs to the class-II aminoacyl-tRNA synthetase family. Type 1 subfamily. Homodimer.

The protein localises to the cytoplasm. The enzyme catalyses tRNA(Asp) + L-aspartate + ATP = L-aspartyl-tRNA(Asp) + AMP + diphosphate. Functionally, catalyzes the attachment of L-aspartate to tRNA(Asp) in a two-step reaction: L-aspartate is first activated by ATP to form Asp-AMP and then transferred to the acceptor end of tRNA(Asp). The sequence is that of Aspartate--tRNA ligase from Streptococcus pyogenes serotype M1.